A 340-amino-acid polypeptide reads, in one-letter code: Glyceraldehyde-3-phosphate dehydrogenase (340 aa).

NAD(+) is bound by residues 11 to 12 and glycine 109; that span reads TI. 138–140 is a D-glyceraldehyde 3-phosphate binding site; the sequence is SCN. Catalysis depends on cysteine 139, which acts as the Nucleophile. NAD(+) is bound at residue arginine 167. A D-glyceraldehyde 3-phosphate-binding site is contributed by 193-194; sequence HA. Position 300 (glutamine 300) interacts with NAD(+).

Belongs to the glyceraldehyde-3-phosphate dehydrogenase family. In terms of assembly, homotetramer.

It is found in the cytoplasm. The catalysed reaction is D-glyceraldehyde 3-phosphate + phosphate + NADP(+) = (2R)-3-phospho-glyceroyl phosphate + NADPH + H(+). It carries out the reaction D-glyceraldehyde 3-phosphate + phosphate + NAD(+) = (2R)-3-phospho-glyceroyl phosphate + NADH + H(+). It participates in carbohydrate degradation; glycolysis; pyruvate from D-glyceraldehyde 3-phosphate: step 1/5. The sequence is that of Glyceraldehyde-3-phosphate dehydrogenase from Saccharolobus islandicus (strain Y.N.15.51 / Yellowstone #2) (Sulfolobus islandicus).